The primary structure comprises 448 residues: Glutamate--tRNA ligase 1 (448 aa).

Positions 9–19 (PSPTGKLHIGN) match the 'HIGH' region motif. The short motif at 240-244 (KISKR) is the 'KMSKS' region element. Residue Lys243 participates in ATP binding.

This sequence belongs to the class-I aminoacyl-tRNA synthetase family. Glutamate--tRNA ligase type 1 subfamily. As to quaternary structure, monomer.

It localises to the cytoplasm. It catalyses the reaction tRNA(Glu) + L-glutamate + ATP = L-glutamyl-tRNA(Glu) + AMP + diphosphate. Functionally, catalyzes the attachment of glutamate to tRNA(Glu) in a two-step reaction: glutamate is first activated by ATP to form Glu-AMP and then transferred to the acceptor end of tRNA(Glu). The polypeptide is Glutamate--tRNA ligase 1 (Orientia tsutsugamushi (strain Ikeda) (Rickettsia tsutsugamushi)).